The sequence spans 381 residues: Acetylornithine deacetylase (381 aa).

Position 79 (His79) interacts with Zn(2+). Asp81 is a catalytic residue. Asp111 serves as a coordination point for Zn(2+). Glu143 is a catalytic residue. The Zn(2+) site is built by Glu144, Glu168, and His354.

The protein belongs to the peptidase M20A family. ArgE subfamily. In terms of assembly, homodimer. It depends on Zn(2+) as a cofactor. The cofactor is Co(2+). Glutathione serves as cofactor.

The protein localises to the cytoplasm. It carries out the reaction N(2)-acetyl-L-ornithine + H2O = L-ornithine + acetate. It functions in the pathway amino-acid biosynthesis; L-arginine biosynthesis; L-ornithine from N(2)-acetyl-L-ornithine (linear): step 1/1. Catalyzes the hydrolysis of the amide bond of N(2)-acetylated L-amino acids. Cleaves the acetyl group from N-acetyl-L-ornithine to form L-ornithine, an intermediate in L-arginine biosynthesis pathway, and a branchpoint in the synthesis of polyamines. The sequence is that of Acetylornithine deacetylase from Buchnera aphidicola subsp. Acyrthosiphon pisum (strain Tuc7).